A 404-amino-acid chain; its full sequence is S-adenosylmethionine synthase (404 aa).

H17 provides a ligand contact to ATP. D19 is a binding site for Mg(2+). E45 provides a ligand contact to K(+). L-methionine is bound by residues E58 and Q101. A flexible loop region spans residues 101–111 (QSPDINRGVDR). Residues 172–174 (DAK), 246–247 (RF), D255, 261–262 (RK), A278, and K282 each bind ATP. An L-methionine-binding site is contributed by D255. K286 provides a ligand contact to L-methionine.

This sequence belongs to the AdoMet synthase family. In terms of assembly, homotetramer; dimer of dimers. Mg(2+) serves as cofactor. The cofactor is K(+).

Its subcellular location is the cytoplasm. It catalyses the reaction L-methionine + ATP + H2O = S-adenosyl-L-methionine + phosphate + diphosphate. It functions in the pathway amino-acid biosynthesis; S-adenosyl-L-methionine biosynthesis; S-adenosyl-L-methionine from L-methionine: step 1/1. Catalyzes the formation of S-adenosylmethionine (AdoMet) from methionine and ATP. The overall synthetic reaction is composed of two sequential steps, AdoMet formation and the subsequent tripolyphosphate hydrolysis which occurs prior to release of AdoMet from the enzyme. This Chlorobaculum tepidum (strain ATCC 49652 / DSM 12025 / NBRC 103806 / TLS) (Chlorobium tepidum) protein is S-adenosylmethionine synthase.